Here is a 228-residue protein sequence, read N- to C-terminus: UPF0758 protein CLK_2387 (228 aa).

One can recognise an MPN domain in the interval 106 to 228 (KISTPLDVSN…YVSMKEKGTI (123 aa)). 3 residues coordinate Zn(2+): His177, His179, and Asp190. The JAMM motif signature appears at 177-190 (HNHPSGDPTPSKED).

This sequence belongs to the UPF0758 family.

The protein is UPF0758 protein CLK_2387 of Clostridium botulinum (strain Loch Maree / Type A3).